Reading from the N-terminus, the 525-residue chain is Acetyl-CoA hydrolase (525 aa).

280–284 (GIGNI) contacts CoA. The active-site 5-glutamyl coenzyme A thioester intermediate is Glu-305. The CoA site is built by Asn-395 and Gly-399.

Belongs to the acetyl-CoA hydrolase/transferase family.

The protein resides in the cytoplasm. The enzyme catalyses acetyl-CoA + H2O = acetate + CoA + H(+). Functionally, required for utilization of acetate. The polypeptide is Acetyl-CoA hydrolase (acu-8) (Neurospora crassa (strain ATCC 24698 / 74-OR23-1A / CBS 708.71 / DSM 1257 / FGSC 987)).